The following is a 948-amino-acid chain: Coiled-coil domain-containing protein 66 (948 aa).

Phosphothreonine is present on residues threonine 115 and threonine 121. Position 369 is a phosphoserine (serine 369). The tract at residues 458–499 is disordered; sequence DRRRQKQLEHQKAITAQVEEKRRKKQLEEEQRKKEEQEEELR. The stretch at 467–558 forms a coiled coil; that stretch reads HQKAITAQVE…EQRIRELAQK (92 aa). The interval 570-948 is mediates localization to cilia, centrosomes and spindle microtubules and the interaction with PCM1, CEP290, CEP104 and CSPP1; it reads GVDTIQMEYN…NQEESFGSSF (379 aa). A Phosphoserine modification is found at serine 606. Disordered stretches follow at residues 690-713 and 788-808; these read QTKH…KRYI and SFSK…RTQQ.

In terms of assembly, homodimer; disulfide-linked. Interacts with CEP290. Interacts with PCM1. Interacts with ARMC9, TOGARAM1, CSPP1 and CEP104. Interacts with CDK5RAP2, CEP152, CEP192, TBG1 and PRC1. Widely expressed (at protein level). Expressed in retina, mainly in photoreceptors but also in outer plexiform and ganglion cell layers (at protein level).

It is found in the cytoplasm. It localises to the cytoskeleton. The protein resides in the microtubule organizing center. The protein localises to the centrosome. Its subcellular location is the centriolar satellite. It is found in the cell projection. It localises to the cilium. The protein resides in the cilium basal body. The protein localises to the cilium axoneme. Its subcellular location is the photoreceptor inner segment. It is found in the photoreceptor outer segment. It localises to the spindle. The protein resides in the midbody. In terms of biological role, microtubule-binding protein required for ciliogenesis. May function in ciliogenesis by mediating the transport of proteins like BBS4 to the cilium, but also through the organization of the centriolar satellites. Required for the assembly of signaling-competent cilia with proper structure and length. Mediates this function in part by regulating transition zone assembly and basal body recruitment of the IFT-B complex. Cooperates with the ciliopathy proteins CSPP1 and CEP104 during cilium length regulation. Plays two important roles during cell division. First, is required for mitotic progression via regulation of spindle assembly, organization and orientation, levels of spindle microtubules (MTs), kinetochore-fiber integrity, and chromosome alignment. Second, functions during cytokinesis in part by regulating assembly and organization of central spindle and midbody MTs. Plays a role in retina morphogenesis and/or homeostasis. The protein is Coiled-coil domain-containing protein 66 of Homo sapiens (Human).